The chain runs to 285 residues: MGDLGFLSKLLDQVQSHSTVIGKIWMTVLFLFRIMVLGAGAESVWGDEQSDFTCNTQQPGCENVCYDWTFPISHIRFWVLQIIFVSTPTLIYLGHAMHIIQQETKLRARLSSPGGSRLCKQPKYTNEQGKVKIKGNLLGSYLTQLVFKIIIEAAFIVGQYYLYGFIMVPMFPCSKKPCPFTVECYMSRPTEKTIFIIFMLVVACVSLLLNVIEVFYLICTRVRCGSRAHSHKITSAENPASLSSPRWPTVEDSLKQNKMNMELETSQSIGGSLDGAKEEKRLLSH.

Residues 2–19 (GDLGFLSKLLDQVQSHST) lie on the Cytoplasmic side of the membrane. A helical transmembrane segment spans residues 20-40 (VIGKIWMTVLFLFRIMVLGAG). Topologically, residues 41 to 76 (AESVWGDEQSDFTCNTQQPGCENVCYDWTFPISHIR) are extracellular. Residues 77–99 (FWVLQIIFVSTPTLIYLGHAMHI) traverse the membrane as a helical segment. Residues 100 to 148 (IQQETKLRARLSSPGGSRLCKQPKYTNEQGKVKIKGNLLGSYLTQLVFK) are Cytoplasmic-facing. Residues 149 to 171 (IIIEAAFIVGQYYLYGFIMVPMF) traverse the membrane as a helical segment. Topologically, residues 172-194 (PCSKKPCPFTVECYMSRPTEKTI) are extracellular. A helical transmembrane segment spans residues 195-217 (FIIFMLVVACVSLLLNVIEVFYL). The Cytoplasmic portion of the chain corresponds to 218-285 (ICTRVRCGSR…AKEEKRLLSH (68 aa)). A disordered region spans residues 264-285 (ETSQSIGGSLDGAKEEKRLLSH). Positions 275 to 285 (GAKEEKRLLSH) are enriched in basic and acidic residues.

This sequence belongs to the connexin family. Beta-type (group I) subfamily. As to quaternary structure, a connexon is composed of a hexamer of connexins.

The protein resides in the cell membrane. It is found in the cell junction. The protein localises to the gap junction. In terms of biological role, one gap junction consists of a cluster of closely packed pairs of transmembrane channels, the connexons, through which materials of low MW diffuse from one cell to a neighboring cell. May be involved in ovarian follicular maturation. In Micropogonias undulatus (Atlantic croaker), this protein is Gap junction Cx32.2 protein.